Here is a 283-residue protein sequence, read N- to C-terminus: NAD kinase (283 aa).

Asp68 serves as the catalytic Proton acceptor. Residues 68-69 (DG), Arg73, 142-143 (ND), Arg153, Arg170, Asp172, and 183-188 (TAYSLS) each bind NAD(+).

The protein belongs to the NAD kinase family. A divalent metal cation is required as a cofactor.

The protein localises to the cytoplasm. It carries out the reaction NAD(+) + ATP = ADP + NADP(+) + H(+). Its function is as follows. Involved in the regulation of the intracellular balance of NAD and NADP, and is a key enzyme in the biosynthesis of NADP. Catalyzes specifically the phosphorylation on 2'-hydroxyl of the adenosine moiety of NAD to yield NADP. The sequence is that of NAD kinase from Symbiobacterium thermophilum (strain DSM 24528 / JCM 14929 / IAM 14863 / T).